The sequence spans 405 residues: Type II secretion system protein F (405 aa).

Topologically, residues 1–168 (MAAFEYLALD…QRQQSRQKIQ (168 aa)) are cytoplasmic. Ca(2+) contacts are provided by threonine 97, glutamate 151, and aspartate 155. A helical transmembrane segment spans residues 169 to 189 (LALLYPVILMVASLAIVGFLL). At 190–219 (GYVVPDVVRVFIDSGQTLPLLTRVLIGVSD) the chain is on the periplasmic side. Residues 220–239 (WVKAWGALAFVAAIGGVIGF) form a helical membrane-spanning segment. Residues 240 to 376 (RYALRKDAFR…IGLMVGLFEP (137 aa)) are Cytoplasmic-facing. The helical transmembrane segment at 377–397 (FMLIFMGAVVLVIVLAILLPI) threads the bilayer. Residues 398 to 405 (LSLNQLVG) lie on the Periplasmic side of the membrane.

The protein belongs to the GSP F family. Type II secretion system is composed of four main components: the outer membrane complex, the inner membrane complex, the cytoplasmic secretion ATPase and the periplasm-spanning pseudopilus. Homodimer. Interacts with XcpR/GspE and XcpY/GspL components.

It is found in the cell inner membrane. Component of the type II secretion system inner membrane complex required for the energy-dependent secretion of extracellular factors such as proteases and toxins from the periplasm. The sequence is that of Type II secretion system protein F (xcpS) from Pseudomonas aeruginosa (strain ATCC 15692 / DSM 22644 / CIP 104116 / JCM 14847 / LMG 12228 / 1C / PRS 101 / PAO1).